The following is a 363-amino-acid chain: Type-2 angiotensin II receptor (363 aa).

Residues 1–45 (MKDNFSFAATSRNITSSLPFDNLNATGTNESAFNCSHKPADKHLE) are Extracellular-facing. N-linked (GlcNAc...) asparagine glycosylation is found at N4, N13, N24, N29, and N34. 2 disulfide bridges follow: C35/C290 and C117/C195. A helical transmembrane segment spans residues 46 to 70 (AIPVLYYMIFVIGFAVNIVVVSLFC). Over 71–80 (CQKGPKKVSS) the chain is Cytoplasmic. A helical membrane pass occupies residues 81–104 (IYIFNLAVADLLLLATLPLWATYY). Angiotensin II-binding residues include Y103 and Y104. Residues 105 to 114 (SYRYDWLFGP) are Extracellular-facing. A helical membrane pass occupies residues 115 to 140 (VMCKVFGSFLTLNMFASIFFITCMSV). The Cytoplasmic segment spans residues 141-159 (DRYQSVIYPFLSQRRNPWQ). Residues 160–181 (ASYVVPLVWCMACLSSLPTFYF) form a helical membrane-spanning segment. Angiotensin II contacts are provided by R182, Y204, and K215. Topologically, residues 182-206 (RDVRTIEYLGVNACIMAFPPEKYAQ) are extracellular. A helical transmembrane segment spans residues 207–232 (WSAGIALMKNILGFIIPLIFIATCYF). Residues 233–257 (GIRKHLLKTNSYGKNRITRDQVLKM) are Cytoplasmic-facing. Residues 258–281 (AAAVVLAFIICWLPFHVLTFLDAL) traverse the membrane as a helical segment. D279 is a binding site for angiotensin II. Over 282-294 (TWMGIINSCEVIA) the chain is Extracellular. The chain crosses the membrane as a helical span at residues 295-320 (VIDLALPFAILLGFTNSCVNPFLYCF). Angiotensin II is bound at residue D297. The Cytoplasmic portion of the chain corresponds to 321–363 (VGNRFQQKLRSVFRVPITWLQGKRETMSCRKSSSLREMDTFVS). Positions 324-333 (RFQQKLRSVF) are helix VIII. S354 bears the Phosphoserine; by PKC mark.

Belongs to the G-protein coupled receptor 1 family. In terms of assembly, interacts with MTUS1. In terms of tissue distribution, abundant expression in fetal tissues, immature brain, skin wound and atretic ovarian follicles.

It is found in the cell membrane. In terms of biological role, receptor for angiotensin II, a vasoconstricting peptide. Signals primarily via a non-canonical G-protein- and beta-arrestin independent pathways. Cooperates with MTUS1 to inhibit ERK2 activation and cell proliferation. The polypeptide is Type-2 angiotensin II receptor (Rattus norvegicus (Rat)).